The chain runs to 83 residues: Toxin TdNa3 (83 aa).

Residues 1–20 (MKGMIMLISCLMLIDVVVES) form the signal peptide. The region spanning 21–82 (KNGYIIEPKG…IFDYYNNKCG (62 aa)) is the LCN-type CS-alpha/beta domain. Intrachain disulfides connect Cys31-Cys81, Cys35-Cys57, Cys43-Cys62, and Cys47-Cys64. Cys81 carries the cysteine amide modification.

This sequence belongs to the long (4 C-C) scorpion toxin superfamily. Sodium channel inhibitor family. Beta subfamily. Expressed by the venom gland.

It is found in the secreted. In terms of biological role, inhibits the sodium currents (Nav) in an apparent irreversible manner. Produces small depolarization and induces repetitive firing in squid axons. Is specific for arthropods (crickets, triatomides, crabs and squids), but is non-toxic to mice. The chain is Toxin TdNa3 from Tityus discrepans (Venezuelan scorpion).